Reading from the N-terminus, the 495-residue chain is Glutamate--tRNA ligase 1 (495 aa).

The 'HIGH' region motif lies at 10–20 (PSPTGALHMGG). Positions 251 to 255 (KLSKR) match the 'KMSKS' region motif. Lysine 254 contacts ATP.

It belongs to the class-I aminoacyl-tRNA synthetase family. Glutamate--tRNA ligase type 1 subfamily. In terms of assembly, monomer.

It is found in the cytoplasm. It carries out the reaction tRNA(Glu) + L-glutamate + ATP = L-glutamyl-tRNA(Glu) + AMP + diphosphate. Catalyzes the attachment of glutamate to tRNA(Glu) in a two-step reaction: glutamate is first activated by ATP to form Glu-AMP and then transferred to the acceptor end of tRNA(Glu). The sequence is that of Glutamate--tRNA ligase 1 from Syntrophomonas wolfei subsp. wolfei (strain DSM 2245B / Goettingen).